The following is a 154-amino-acid chain: uncharacterized protein (154 aa).

Residues 1 to 19 form the signal peptide; the sequence is MWSLKSTLCIALLVTYSVA. 2 ShKT domains span residues 67-102 and 113-150; these read CADD…CGFC and CVDS…CKLC. Cystine bridges form between Cys-67-Cys-102, Cys-75-Cys-95, Cys-82-Cys-99, Cys-113-Cys-150, Cys-120-Cys-143, and Cys-129-Cys-147.

This is an uncharacterized protein from Caenorhabditis elegans.